The primary structure comprises 646 residues: Protein real-time (646 aa).

The PRELI/MSF1 domain occupies 2 to 175; the sequence is VQKYESPVRI…FINELKKEGI (174 aa). The region spanning 294–471 is the CRAL-TRIO domain; it reads TPVVVEKYFP…FLGGSCITMI (178 aa). The 148-residue stretch at 499 to 646 folds into the GOLD domain; sequence HHGLYKSVDL…GFSSNSLQSR (148 aa).

It localises to the mitochondrion. The polypeptide is Protein real-time (Aedes aegypti (Yellowfever mosquito)).